Consider the following 374-residue polypeptide: Probable inactive patatin-3-Kuras 1 (374 aa).

The first 11 residues, 1 to 11, serve as a signal peptide directing secretion; sequence MMLATTSSTFA. A PNPLA domain is found at 20–217; it reads LSIDGGGIKG…AAVDPSLLSI (198 aa). The GXGXXG signature appears at 24-29; the sequence is GGGIKG. Residues asparagine 48 and asparagine 191 are each glycosylated (N-linked (GlcNAc...) asparagine). Aspartate 204 (proton acceptor) is an active-site residue. Asparagine 257 is a glycosylation site (N-linked (GlcNAc...) asparagine).

Belongs to the patatin family. N-glycosylated. As to expression, tuber.

It is found in the vacuole. This Solanum tuberosum (Potato) protein is Probable inactive patatin-3-Kuras 1 (pat3-k1).